The following is a 60-amino-acid chain: U-scutigerotoxin(02)-Tl4a (60 aa).

This sequence belongs to the scutigerotoxin-02 family. Post-translationally, contains 3 disulfide bonds. In terms of tissue distribution, expressed by the venom gland.

The protein resides in the secreted. The chain is U-scutigerotoxin(02)-Tl4a from Thereuopoda longicornis (Long-legged centipede).